The sequence spans 236 residues: Small ribosomal subunit protein uS2c (236 aa).

It belongs to the universal ribosomal protein uS2 family.

It is found in the plastid. Its subcellular location is the chloroplast. The polypeptide is Small ribosomal subunit protein uS2c (rps2) (Carica papaya (Papaya)).